A 558-amino-acid polypeptide reads, in one-letter code: Vanin-like protein 1 (558 aa).

The first 22 residues, 1–22 (MSNTWWWLSVVLLILGLMPGMS), serve as a signal peptide directing secretion. Residues 33 to 299 (YTAGVVEFKQ…RAIYVAQVPK (267 aa)) enclose the CN hydrolase domain. An N-linked (GlcNAc...) asparagine glycan is attached at Asn65. Residue Glu76 is the Proton acceptor of the active site. 3 N-linked (GlcNAc...) asparagine glycosylation sites follow: Asn103, Asn120, and Asn128. Lys171 functions as the Proton donor in the catalytic mechanism. A glycan (N-linked (GlcNAc...) asparagine) is linked at Asn180. Cys203 acts as the Nucleophile in catalysis. 2 N-linked (GlcNAc...) asparagine glycosylation sites follow: Asn354 and Asn379. A lipid anchor (GPI-anchor amidated serine) is attached at Ser531. The propeptide at 532 to 558 (GSPGLRILGGWLAMPLIILAIARTMSS) is removed in mature form.

Belongs to the carbon-nitrogen hydrolase superfamily. BTD/VNN family. In terms of tissue distribution, expressed in larvae and early pupae. Expressed in third instar larvae.

It localises to the cell membrane. The chain is Vanin-like protein 1 from Drosophila melanogaster (Fruit fly).